We begin with the raw amino-acid sequence, 100 residues long: Putative membrane protein insertion efficiency factor (100 aa).

Belongs to the UPF0161 family.

The protein resides in the cell membrane. Functionally, could be involved in insertion of integral membrane proteins into the membrane. This chain is Putative membrane protein insertion efficiency factor, found in Enterococcus faecalis (strain ATCC 700802 / V583).